Consider the following 180-residue polypeptide: Decaprenylphosphoryl-5-phosphoribose phosphatase (180 aa).

4 consecutive transmembrane segments (helical) span residues 31–51 (ALSHFGEHSAGWVALAAAGAL), 61–81 (LAVGAGAFLAHAAAVVIKRVV), 116–136 (VLLAQTTGVPAPALLVPPMAL), and 139–159 (LVLGVHYPTDVVTGVVVGALV).

This sequence belongs to the PA-phosphatase related phosphoesterase family.

The protein localises to the cell membrane. The catalysed reaction is trans,octa-cis-decaprenylphospho-beta-D-ribofuranose 5-phosphate + H2O = trans,octa-cis-decaprenylphospho-beta-D-ribofuranose + phosphate. Its pathway is cell wall biogenesis; cell wall polysaccharide biosynthesis. In terms of biological role, phosphatase involved in the biosynthesis of decaprenylphosphoryl arabinose (DPA), which serves as the arabinose donor for the biosynthesis of arabinogalactan, the major mycobacterial cell wall polysaccharide. Catalyzes the dephosphorylation of decaprenylphosphoryl-5-phosphoribose (DPPR) to decaprenyl-phosphoribose (DPR). The polypeptide is Decaprenylphosphoryl-5-phosphoribose phosphatase (Mycolicibacterium smegmatis (strain ATCC 700084 / mc(2)155) (Mycobacterium smegmatis)).